The chain runs to 396 residues: S-adenosylmethionine synthase (396 aa).

Residue His-15 participates in ATP binding. Residue Asp-17 coordinates Mg(2+). Glu-43 is a binding site for K(+). L-methionine is bound by residues Glu-56 and Gln-99. The interval 99-109 (QSSDIAQGVDR) is flexible loop. ATP-binding positions include 175 to 177 (DGK), 241 to 242 (RF), Asp-250, 256 to 257 (RK), Ser-273, and Lys-277. Asp-250 is a binding site for L-methionine. Residue Lys-281 coordinates L-methionine.

Belongs to the AdoMet synthase family. In terms of assembly, homotetramer; dimer of dimers. Requires Mg(2+) as cofactor. It depends on K(+) as a cofactor.

Its subcellular location is the cytoplasm. It carries out the reaction L-methionine + ATP + H2O = S-adenosyl-L-methionine + phosphate + diphosphate. It participates in amino-acid biosynthesis; S-adenosyl-L-methionine biosynthesis; S-adenosyl-L-methionine from L-methionine: step 1/1. Catalyzes the formation of S-adenosylmethionine (AdoMet) from methionine and ATP. The overall synthetic reaction is composed of two sequential steps, AdoMet formation and the subsequent tripolyphosphate hydrolysis which occurs prior to release of AdoMet from the enzyme. This Pelotomaculum thermopropionicum (strain DSM 13744 / JCM 10971 / SI) protein is S-adenosylmethionine synthase.